The chain runs to 547 residues: Chaperonin GroEL 3 (547 aa).

ATP-binding positions include 30–33, Lys51, 87–91, Gly415, and Asp496; these read TLGP and DGTTT.

The protein belongs to the chaperonin (HSP60) family. Forms a cylinder of 14 subunits composed of two heptameric rings stacked back-to-back. Interacts with the co-chaperonin GroES.

Its subcellular location is the cytoplasm. It catalyses the reaction ATP + H2O + a folded polypeptide = ADP + phosphate + an unfolded polypeptide.. Its function is as follows. Together with its co-chaperonin GroES, plays an essential role in assisting protein folding. The GroEL-GroES system forms a nano-cage that allows encapsulation of the non-native substrate proteins and provides a physical environment optimized to promote and accelerate protein folding. This Bradyrhizobium sp. (strain ORS 278) protein is Chaperonin GroEL 3.